Here is a 551-residue protein sequence, read N- to C-terminus: GMP synthase [glutamine-hydrolyzing] (551 aa).

A Glutamine amidotransferase type-1 domain is found at 40-233 (KILIVDFGSQ…VRKIAGLTGD (194 aa)). Cysteine 117 serves as the catalytic Nucleophile. Residues histidine 207 and glutamate 209 contribute to the active site. The region spanning 234 to 426 (WTMRAFREEE…LGLPEIFVGR (193 aa)) is the GMPS ATP-PPase domain. 261 to 267 (SGGVDSA) contributes to the ATP binding site.

As to quaternary structure, homodimer.

The catalysed reaction is XMP + L-glutamine + ATP + H2O = GMP + L-glutamate + AMP + diphosphate + 2 H(+). The protein operates within purine metabolism; GMP biosynthesis; GMP from XMP (L-Gln route): step 1/1. Catalyzes the synthesis of GMP from XMP. This Bradyrhizobium diazoefficiens (strain JCM 10833 / BCRC 13528 / IAM 13628 / NBRC 14792 / USDA 110) protein is GMP synthase [glutamine-hydrolyzing].